Consider the following 189-residue polypeptide: Probable nicotinate-nucleotide adenylyltransferase (189 aa).

The protein belongs to the NadD family.

It catalyses the reaction nicotinate beta-D-ribonucleotide + ATP + H(+) = deamido-NAD(+) + diphosphate. It functions in the pathway cofactor biosynthesis; NAD(+) biosynthesis; deamido-NAD(+) from nicotinate D-ribonucleotide: step 1/1. In terms of biological role, catalyzes the reversible adenylation of nicotinate mononucleotide (NaMN) to nicotinic acid adenine dinucleotide (NaAD). The sequence is that of Probable nicotinate-nucleotide adenylyltransferase from Bacillus cereus (strain ATCC 10987 / NRS 248).